Reading from the N-terminus, the 220-residue chain is Ribosome biogenesis protein 15 (220 aa).

The segment at 1–82 (MVKSTSKTST…KQANEKKSKD (82 aa)) is disordered. The span at 9–30 (STKETVTKQPTEEKPIQEKEEL) shows a compositional bias: basic and acidic residues. Residues 39 to 60 (SDEEDEKDEDEIEGLAASDDEQ) are compositionally biased toward acidic residues. Positions 91–169 (GIIYVSRLPH…HLLQVRVLPK (79 aa)) constitute an RRM domain.

In terms of assembly, component of the pre-66S ribosomal particle. Interacts with NOP7 and RRP1.

The protein localises to the cytoplasm. It is found in the nucleus. It localises to the nucleolus. Functionally, involved in the biogenesis of the 60S ribosomal subunit. Required for pre-rRNA processing and cytokinesis. Associates with the precursors of the 25S and 5.8S rRNAs. The sequence is that of Ribosome biogenesis protein 15 from Saccharomyces cerevisiae (strain ATCC 204508 / S288c) (Baker's yeast).